The primary structure comprises 904 residues: MTSHSPKLTPMFEQYMNIKAEYPDALLFYRMGDFYELFFEDAEVAARELQIALTCRNPNAENKVPMCGVPHHSARSYISQLVDKGYKVAICEQMEDPREAKGLVKRGVIRVLTSGTALEDENLSPKAHTYLGALCWDKSEGAGGFAWVDFSTGEWSGLQSRKEQELWQWVQKMAPRELLLADTLTPPASLELTETQFSKVPERAYFDYKRSAEKIMSAQQVAELGALGLENRKELVRACGALLTYLSQTQKQDLNHLCQFKPLNLNRHLLLDEITERNLELFRRLDGRKGKGTLWHVLDHTVTPMGGRLLQERLKHPWREQAPIDETQEAVSHFFAHNTLRRQLREALDTVYDIERLSTRIFLNRATPRDYVALRQSLKALPAVRELLEAPQTGDGRYATPEEQLGAALPPFLHRMLKSWDDLADYHDLLEKALVDNPPHVITEGGLFRQGFHPALDELMDLSEHGASKLHDLLAEVQQTTGISKIKLGNNRVFGYYFEVPKSVSEELPDTFVRRQTLANAERYTSERLKELEEKLFSAADKRKTMELKLFQQLREHVAQARPRVLFMADLLATLDHWQGLAEAARHWNWVRPVLHDGQDIVIREGRHPVVEAVQGPAGFIPNDLRIDDQRRLLLITGPNMAGKSTVLRQAAIICILAQIGSFVPAREARIGLCDRIFSRVGASDNLAQGQSTFMVEMMETARILRQATRRSLVILDEIGRGTSTFDGLALAWAVVEELMKKQQAGIRTLFATHYHELTSLEGTIPGVHNMNIAIKEWGGEIVFLRRLVPGPSDRSYGVEVAKLAGVPQNVVQRARQILELLEQKSKADGTRRPASYHEAQPLLPGMPEPPSTASAEPPQTVTPPEPPVLTALRDLDTDNLTPLEALTVLTEWKTLWGAGKNEC.

638 to 645 (GPNMAGKS) provides a ligand contact to ATP. The disordered stretch occupies residues 825-869 (KSKADGTRRPASYHEAQPLLPGMPEPPSTASAEPPQTVTPPEPPV).

The protein belongs to the DNA mismatch repair MutS family.

In terms of biological role, this protein is involved in the repair of mismatches in DNA. It is possible that it carries out the mismatch recognition step. This protein has a weak ATPase activity. This is DNA mismatch repair protein MutS from Oleidesulfovibrio alaskensis (strain ATCC BAA-1058 / DSM 17464 / G20) (Desulfovibrio alaskensis).